A 389-amino-acid polypeptide reads, in one-letter code: Tryptophan synthase beta chain (389 aa).

The residue at position 84 (K84) is an N6-(pyridoxal phosphate)lysine.

The protein belongs to the TrpB family. Tetramer of two alpha and two beta chains. Pyridoxal 5'-phosphate serves as cofactor.

The enzyme catalyses (1S,2R)-1-C-(indol-3-yl)glycerol 3-phosphate + L-serine = D-glyceraldehyde 3-phosphate + L-tryptophan + H2O. The protein operates within amino-acid biosynthesis; L-tryptophan biosynthesis; L-tryptophan from chorismate: step 5/5. The beta subunit is responsible for the synthesis of L-tryptophan from indole and L-serine. The chain is Tryptophan synthase beta chain from Methanococcus aeolicus (strain ATCC BAA-1280 / DSM 17508 / OCM 812 / Nankai-3).